The primary structure comprises 625 residues: Pentatricopeptide repeat-containing protein At2g36980, mitochondrial (625 aa).

The transit peptide at 1 to 7 (MSVLVRL) directs the protein to the mitochondrion. 15 PPR repeats span residues 3–33 (VLVRLTSKIASLAKSGRIASARQVFDGMPEL), 34–68 (DTVAWNTMLTSYSRLGLHQEAIALFTQLRFSDAKP), 69–103 (DDYSFTAILSTCASLGNVKFGRKIQSLVIRSGFCA), 104–134 (SLPVNNSLIDMYGKCSDTLSANKVFRDMCCD), 137–167 (NEVTWCSLLFAYMNAEQFEAALDVFVEMPKR), 168–202 (VAFAWNIMISGHAHCGKLESCLSLFKEMLESEFKP), 203–238 (DCYTFSSLMNACSADSSNVVYGRMVHAVMLKNGWSS), 239–269 (AVEAKNSVLSFYTKLGSRDDAMRELESIEVL), 270–300 (TQVSWNSIIDACMKIGETEKALEVFHLAPEK), 301–335 (NIVTWTTMITGYGRNGDGEQALRFFVEMMKSGVDS), 336–370 (DHFAYGAVLHACSGLALLGHGKMIHGCLIHCGFQG), 371–401 (YAYVGNALVNLYAKCGDIKEADRAFGDIANK), 402–436 (DLVSWNTMLFAFGVHGLADQALKLYDNMIASGIKP), 437–471 (DNVTFIGLLTTCSHSGLVEEGCMIFESMVKDYRIP), and 473–503 (EVDHVTCMIDMFGRGGHLAEAKDLATTYSSL). The interval 512 to 587 (SWETLLGACS…TPGCSWIEVG (76 aa)) is type E motif. The type E(+) motif stretch occupies residues 588 to 618 (NQVSTFVVGDSSHPRLEELSETLNCLQHEMR).

It belongs to the PPR family. PCMP-E subfamily.

It is found in the mitochondrion. In Arabidopsis thaliana (Mouse-ear cress), this protein is Pentatricopeptide repeat-containing protein At2g36980, mitochondrial (PCMP-E73).